A 205-amino-acid chain; its full sequence is Cytochrome c biogenesis ATP-binding export protein CcmA (205 aa).

In terms of domain architecture, ABC transporter spans 2–204; sequence LEVSNLTAIR…SPKLRKIKLG (203 aa). 34–41 provides a ligand contact to ATP; that stretch reads GRNGTGKT.

It belongs to the ABC transporter superfamily. CcmA exporter (TC 3.A.1.107) family. The complex is composed of two ATP-binding proteins (CcmA) and two transmembrane proteins (CcmB).

The protein localises to the cell inner membrane. It catalyses the reaction heme b(in) + ATP + H2O = heme b(out) + ADP + phosphate + H(+). In terms of biological role, part of the ABC transporter complex CcmAB involved in the biogenesis of c-type cytochromes; once thought to export heme, this seems not to be the case, but its exact role is uncertain. Responsible for energy coupling to the transport system. The sequence is that of Cytochrome c biogenesis ATP-binding export protein CcmA from Vibrio parahaemolyticus serotype O3:K6 (strain RIMD 2210633).